Consider the following 2532-residue polypeptide: Lovastatin diketide synthase lovF (2532 aa).

The Ketosynthase family 3 (KS3) domain occupies 10 to 430; the sequence is PAPIAMVGMG…GANAHAIVEQ (421 aa). Active-site for beta-ketoacyl synthase activity residues include Cys-183, His-318, and His-353. The interval 545 to 870 is malonyl-CoA:ACP transacylase (MAT) domain; it reads VFTGQGAQWF…PYLSCLSRGK (326 aa). Ser-635 serves as the catalytic For malonyltransferase activity. Residues 941–1078 are N-terminal hotdog fold; the sequence is HDLIGLQEPL…GLVRAEMDQP (138 aa). Positions 941–1246 are dehydratase (DH) domain; the sequence is HDLIGLQEPL…LEGLVFQSLG (306 aa). Residues 941–1251 enclose the PKS/mFAS DH domain; it reads HDLIGLQEPL…FQSLGASLGT (311 aa). His-973 functions as the Proton acceptor; for dehydratase activity in the catalytic mechanism. Residues 1075–1094 are disordered; it reads MDQPPSSLSNQQRIDPRPWS. The span at 1078 to 1087 shows a compositional bias: polar residues; that stretch reads PPSSLSNQQR. The segment at 1092–1251 is C-terminal hotdog fold; sequence PWSRKTAPQE…FQSLGASLGT (160 aa). Residue Asp-1159 is the Proton donor; for dehydratase activity of the active site. The tract at residues 1423–1607 is methyltransferase (CMet) domain; the sequence is ELVRLCCHKN…ARDCDSHEFY (185 aa). Positions 1825–2144 are enoylreductase (ER) domain; sequence GLLDSLHFTK…SGQHVGKIVV (320 aa). A ketoreductase (KR) domain region spans residues 2168–2340; that stretch reads SYLVAGGLGG…AVTIDLGMVQ (173 aa). The region spanning 2453-2530 is the Carrier domain; that stretch reads ESIAVIMEAM…KVAEVVLQRY (78 aa). Ser-2490 carries the O-(pantetheine 4'-phosphoryl)serine modification.

As to quaternary structure, interacts with LovD. It depends on pantetheine 4'-phosphate as a cofactor.

The enzyme catalyses holo-[2-methylbutanoate polyketide synthase] + 2 malonyl-CoA + S-adenosyl-L-methionine + 2 NADPH + 3 H(+) = (S)-2-methylbutanoyl-[2-methylbutanoate polyketide synthase] + S-adenosyl-L-homocysteine + 2 CO2 + 2 NADP(+) + 2 CoA + H2O. It participates in polyketide biosynthesis; lovastatin biosynthesis. Its function is as follows. Lovastatin diketide synthase; part of the gene cluster that mediates the biosynthesis of lovastatin (also known as mevinolin, mevacor or monacolin K), a hypolipidemic inhibitor of (3S)-hydroxymethylglutaryl-coenzyme A (HMG-CoA) reductase (HMGR). The first step in the biosynthesis of lovastatin is the production of dihydromonacolin L acid by the lovastatin nonaketide synthase lovB and the trans-acting enoyl reductase lovC via condensation of one acetyl-CoA unit and 8 malonyl-CoA units. Dihydromonacolin L acid is released from lovB by the thioesterase lovG. Next, dihydromonacolin L acid is oxidized by the dihydromonacolin L monooxygenase lovA twice to form monacolin J acid. The 2-methylbutyrate moiety of lovastatin is synthesized by the lovastatin diketide synthase lovF via condensation of one acetyl-CoA unit and one malonyl-CoA unit. Finally, the covalent attachment of this moiety to monacolin J acid is catalyzed by the transesterase lovD to yield lovastatin. LovD has broad substrate specificity and can also convert monacolin J to simvastatin using alpha-dimethylbutanoyl-S-methyl-3-mercaptopropionate (DMB-S-MMP) as the thioester acyl donor, and can also catalyze the reverse reaction and function as hydrolase in vitro. LovD has much higher activity with LovF-bound 2-methylbutanoate than with free diketide substrates. This is Lovastatin diketide synthase lovF from Aspergillus terreus.